Consider the following 131-residue polypeptide: Small ribosomal subunit protein uS8 (131 aa).

The protein belongs to the universal ribosomal protein uS8 family. Part of the 30S ribosomal subunit. Contacts proteins S5 and S12.

Functionally, one of the primary rRNA binding proteins, it binds directly to 16S rRNA central domain where it helps coordinate assembly of the platform of the 30S subunit. The polypeptide is Small ribosomal subunit protein uS8 (Clostridium novyi (strain NT)).